The sequence spans 211 residues: Eukaryotic translation initiation factor 4E (211 aa).

The protein belongs to the eukaryotic initiation factor 4E family. As to quaternary structure, eIF4F is a multi-subunit complex, the composition of which varies with external and internal environmental conditions. It is composed of at least eIF4A, eIF4E and eIF4G. eIF4E is also known to interact with other partners.

In terms of biological role, recognizes and binds the 7-methylguanosine-containing mRNA cap during an early step in the initiation of protein synthesis and facilitates ribosome binding by inducing the unwinding of the mRNAs secondary structures. The sequence is that of Eukaryotic translation initiation factor 4E (TIF45) from Eremothecium gossypii (strain ATCC 10895 / CBS 109.51 / FGSC 9923 / NRRL Y-1056) (Yeast).